The chain runs to 616 residues: Dihydroxy-acid dehydratase (616 aa).

Residue Asp81 participates in Mg(2+) binding. Residue Cys122 participates in [2Fe-2S] cluster binding. Residues Asp123 and Lys124 each contribute to the Mg(2+) site. An N6-carboxylysine modification is found at Lys124. Residue Cys195 coordinates [2Fe-2S] cluster. Glu491 lines the Mg(2+) pocket. Ser517 (proton acceptor) is an active-site residue.

Belongs to the IlvD/Edd family. As to quaternary structure, homodimer. [2Fe-2S] cluster is required as a cofactor. The cofactor is Mg(2+).

The catalysed reaction is (2R)-2,3-dihydroxy-3-methylbutanoate = 3-methyl-2-oxobutanoate + H2O. It catalyses the reaction (2R,3R)-2,3-dihydroxy-3-methylpentanoate = (S)-3-methyl-2-oxopentanoate + H2O. The protein operates within amino-acid biosynthesis; L-isoleucine biosynthesis; L-isoleucine from 2-oxobutanoate: step 3/4. It participates in amino-acid biosynthesis; L-valine biosynthesis; L-valine from pyruvate: step 3/4. Functions in the biosynthesis of branched-chain amino acids. Catalyzes the dehydration of (2R,3R)-2,3-dihydroxy-3-methylpentanoate (2,3-dihydroxy-3-methylvalerate) into 2-oxo-3-methylpentanoate (2-oxo-3-methylvalerate) and of (2R)-2,3-dihydroxy-3-methylbutanoate (2,3-dihydroxyisovalerate) into 2-oxo-3-methylbutanoate (2-oxoisovalerate), the penultimate precursor to L-isoleucine and L-valine, respectively. The sequence is that of Dihydroxy-acid dehydratase from Salmonella paratyphi A (strain ATCC 9150 / SARB42).